The primary structure comprises 468 residues: Aldehyde dehydrogenase family 3 member B1 (468 aa).

N-acetylmethionine is present on Met1. 188 to 193 (GNAYVG) serves as a coordination point for NAD(+). Active-site residues include Glu210 and Cys244. 2 S-palmitoyl cysteine lipidation sites follow: Cys462 and Cys463. Cys465 is modified (cysteine methyl ester). A lipid anchor (S-geranylgeranyl cysteine) is attached at Cys465. Positions 466–468 (TLL) are cleaved as a propeptide — removed in mature form.

Belongs to the aldehyde dehydrogenase family. Post-translationally, dually lipidated in the C-terminus; prenylation occurs prior to, and is a prerequisite for palmitoylation. It is also required for activity towards long-chain substrates. In terms of tissue distribution, highly expressed in kidney and liver. In brain is expressed at moderate levels in cortex, striatum and hippocampus, and at lower levels in brainstem and cerebellum.

It is found in the cell membrane. The enzyme catalyses an aldehyde + NAD(+) + H2O = a carboxylate + NADH + 2 H(+). It catalyses the reaction a long-chain fatty aldehyde + NAD(+) + H2O = a long-chain fatty acid + NADH + 2 H(+). The catalysed reaction is a medium-chain fatty aldehyde + NAD(+) + H2O = a medium-chain fatty acid + NADH + 2 H(+). It carries out the reaction octanal + NAD(+) + H2O = octanoate + NADH + 2 H(+). The enzyme catalyses nonanal + NAD(+) + H2O = nonanoate + NADH + 2 H(+). It catalyses the reaction hexadecanoate + NADH + 2 H(+) = hexadecanal + NAD(+) + H2O. The catalysed reaction is (2E)-octenal + NAD(+) + H2O = (2E)-octenoate + NADH + 2 H(+). It carries out the reaction (E)-non-2-enal + NAD(+) + H2O = (E)-non-2-enoate + NADH + 2 H(+). The enzyme catalyses (E)-4-hydroxynon-2-enal + NAD(+) + H2O = (E)-4-hydroxynon-2-enoate + NADH + 2 H(+). It catalyses the reaction (2E)-hexadecenal + NAD(+) + H2O = (E)-hexadec-2-enoate + NADH + 2 H(+). The catalysed reaction is benzaldehyde + NAD(+) + H2O = benzoate + NADH + 2 H(+). It carries out the reaction an aldehyde + NADP(+) + H2O = a carboxylate + NADPH + 2 H(+). The enzyme catalyses a medium-chain fatty aldehyde + NADP(+) + H2O = a medium-chain fatty acid + NADPH + 2 H(+). It catalyses the reaction hexanal + NADP(+) + H2O = hexanoate + NADPH + 2 H(+). The catalysed reaction is octanal + NADP(+) + H2O = octanoate + NADPH + 2 H(+). It carries out the reaction nonanal + NADP(+) + H2O = nonanoate + NADPH + 2 H(+). The enzyme catalyses (2E)-octenal + NADP(+) + H2O = (2E)-octenoate + NADPH + 2 H(+). It catalyses the reaction (E)-non-2-enal + NADP(+) + H2O = (E)-non-2-enoate + NADPH + 2 H(+). The catalysed reaction is (E)-4-hydroxynon-2-enal + NADP(+) + H2O = (E)-4-hydroxynon-2-enoate + NADPH + 2 H(+). It carries out the reaction benzaldehyde + NADP(+) + H2O = benzoate + NADPH + 2 H(+). It participates in alcohol metabolism; ethanol degradation; acetate from ethanol: step 2/2. Oxidizes medium and long chain saturated and unsaturated fatty aldehydes generated in the plasma membrane into non-toxic fatty acids. May have a protective role against the cytotoxicity induced by lipid peroxidation. Short-chain fatty aldehydes are not good substrates. Can use both NADP(+) and NAD(+) as electron acceptor in vitro, however in vivo preference will depend on their tissue levels. Low activity towards acetaldehyde and 3,4-dihydroxyphenylacetaldehyde. Able to metabolize aromatic aldehydes such as benzaldehyde to their acid form. This Mus musculus (Mouse) protein is Aldehyde dehydrogenase family 3 member B1 (Aldh3b1).